The sequence spans 967 residues: RNA polymerase-associated protein RapA (967 aa).

The region spanning glutamate 163–asparagine 333 is the Helicase ATP-binding domain. Aspartate 176–threonine 183 lines the ATP pocket. The DEAH box motif lies at aspartate 279 to histidine 282. Residues arginine 489–aspartate 643 form the Helicase C-terminal domain.

This sequence belongs to the SNF2/RAD54 helicase family. RapA subfamily. Interacts with the RNAP. Has a higher affinity for the core RNAP than for the holoenzyme. Its ATPase activity is stimulated by binding to RNAP.

Transcription regulator that activates transcription by stimulating RNA polymerase (RNAP) recycling in case of stress conditions such as supercoiled DNA or high salt concentrations. Probably acts by releasing the RNAP, when it is trapped or immobilized on tightly supercoiled DNA. Does not activate transcription on linear DNA. Probably not involved in DNA repair. The polypeptide is RNA polymerase-associated protein RapA (Pectobacterium carotovorum subsp. carotovorum (strain PC1)).